An 836-amino-acid chain; its full sequence is Periostin (836 aa).

The N-terminal stretch at 1-21 (MIPFLPMFSLLLLLIVNPINA) is a signal peptide. The EMI domain occupies 40–94 (GPNVCALQQILGTKKKYFSTCKNWYKKSICGQKTTVLYECCPGYMRMEGMKGCPA). Disulfide bonds link Cys-44/Cys-80, Cys-69/Cys-333, Cys-79/Cys-92, Cys-208/Cys-311, and Cys-467/Cys-472. Cys-60 is subject to S-cysteinyl cysteine. FAS1 domains lie at 97–230 (PIDH…DRVL), 234–365 (GTSI…DQVL), 368–492 (DSAK…REII), and 496–628 (EKSL…DKLL). An N-linked (GlcNAc...) asparagine glycan is attached at Asn-599.

In terms of assembly, homodimer. Interacts with BMP1 and fibronectin. Post-translationally, gamma-carboxylation is controversial. Gamma-carboxyglutamated; gamma-carboxyglutamate residues are formed by vitamin K dependent carboxylation; this may be required for calcium binding. According to a more recent report, does not contain vitamin K-dependent gamma-carboxyglutamate residues. Widely expressed with highest levels in aorta, stomach, lower gastrointestinal tract, placenta, uterus, thyroid tissue and breast. Expressed in the kidney. Expressed in the lung. Up-regulated in epithelial ovarian tumors. Not expressed in normal ovaries. Also highly expressed at the tumor periphery of lung carcinoma tissue but not within the tumor. Overexpressed in breast cancers.

Its subcellular location is the golgi apparatus. It is found in the secreted. The protein resides in the extracellular space. It localises to the extracellular matrix. Functionally, induces cell attachment and spreading and plays a role in cell adhesion. Enhances incorporation of BMP1 in the fibronectin matrix of connective tissues, and subsequent proteolytic activation of lysyl oxidase LOX. This chain is Periostin (POSTN), found in Homo sapiens (Human).